The chain runs to 238 residues: Ribitol-5-phosphate cytidylyltransferase (238 aa).

Residues 7–10 (FAGG) and 80–86 (GETGQES) contribute to the CTP site.

Belongs to the IspD/TarI cytidylyltransferase family. TarI subfamily.

The catalysed reaction is D-ribitol 5-phosphate + CTP + H(+) = CDP-L-ribitol + diphosphate. Its function is as follows. Catalyzes the transfer of the cytidylyl group of CTP to D-ribitol 5-phosphate. In Vibrio parahaemolyticus serotype O3:K6 (strain RIMD 2210633), this protein is Ribitol-5-phosphate cytidylyltransferase.